A 598-amino-acid chain; its full sequence is Elongation factor 4 (598 aa).

A tr-type G domain is found at 4-186 (KHIRNFSIIA…VIVRQIPPPE (183 aa)). Residues 16-21 (DHGKST) and 133-136 (NKID) contribute to the GTP site.

This sequence belongs to the TRAFAC class translation factor GTPase superfamily. Classic translation factor GTPase family. LepA subfamily.

It is found in the cell inner membrane. It catalyses the reaction GTP + H2O = GDP + phosphate + H(+). Functionally, required for accurate and efficient protein synthesis under certain stress conditions. May act as a fidelity factor of the translation reaction, by catalyzing a one-codon backward translocation of tRNAs on improperly translocated ribosomes. Back-translocation proceeds from a post-translocation (POST) complex to a pre-translocation (PRE) complex, thus giving elongation factor G a second chance to translocate the tRNAs correctly. Binds to ribosomes in a GTP-dependent manner. This is Elongation factor 4 from Pseudoalteromonas atlantica (strain T6c / ATCC BAA-1087).